A 308-amino-acid polypeptide reads, in one-letter code: Ribosomal RNA large subunit methyltransferase F (308 aa).

This sequence belongs to the methyltransferase superfamily. METTL16/RlmF family.

The protein localises to the cytoplasm. It catalyses the reaction adenosine(1618) in 23S rRNA + S-adenosyl-L-methionine = N(6)-methyladenosine(1618) in 23S rRNA + S-adenosyl-L-homocysteine + H(+). Functionally, specifically methylates the adenine in position 1618 of 23S rRNA. This chain is Ribosomal RNA large subunit methyltransferase F, found in Shigella boydii serotype 18 (strain CDC 3083-94 / BS512).